We begin with the raw amino-acid sequence, 386 residues long: Succinate--CoA ligase [ADP-forming] subunit beta (386 aa).

Positions 9-244 constitute an ATP-grasp domain; the sequence is KEIFRKYGVP…LAEEEPREIQ (236 aa). Residues lysine 46, 53 to 55, glutamate 99, leucine 102, and glutamate 107 each bind ATP; that span reads GRG. Mg(2+)-binding residues include asparagine 199 and aspartate 213. Substrate-binding positions include asparagine 264 and 321–323; that span reads GIM.

This sequence belongs to the succinate/malate CoA ligase beta subunit family. In terms of assembly, heterotetramer of two alpha and two beta subunits. Requires Mg(2+) as cofactor.

The enzyme catalyses succinate + ATP + CoA = succinyl-CoA + ADP + phosphate. The catalysed reaction is GTP + succinate + CoA = succinyl-CoA + GDP + phosphate. It functions in the pathway carbohydrate metabolism; tricarboxylic acid cycle; succinate from succinyl-CoA (ligase route): step 1/1. Its function is as follows. Succinyl-CoA synthetase functions in the citric acid cycle (TCA), coupling the hydrolysis of succinyl-CoA to the synthesis of either ATP or GTP and thus represents the only step of substrate-level phosphorylation in the TCA. The beta subunit provides nucleotide specificity of the enzyme and binds the substrate succinate, while the binding sites for coenzyme A and phosphate are found in the alpha subunit. The chain is Succinate--CoA ligase [ADP-forming] subunit beta from Myxococcus xanthus (strain DK1622).